The following is a 388-amino-acid chain: Omega-hydroxy-beta-dihydromenaquinone-9 sulfotransferase Stf3 (388 aa).

The protein belongs to the Stf3 family.

The catalysed reaction is omega-hydroxy-beta-dihydromenaquinone-9 + 3'-phosphoadenylyl sulfate = omega-sulfo-beta-dihydromenaquinone-9 + adenosine 3',5'-bisphosphate + H(+). Involved in the biosynthesis of sulfomenaquinone (SMK, initially named S881 on the basis of its mass), which is localized in the outer envelope of M.bovis and negatively regulates its virulence. Catalyzes the transfer of a sulfonate group from 3'-phosphoadenosine-5'-phosphosulfate (PAPS) to omega-hydroxy-beta-dihydromenaquinone-9, generating omega-sulfo-beta-dihydromenaquinone-9 (sulfomenaquinone). This Mycobacterium bovis (strain ATCC BAA-935 / AF2122/97) protein is Omega-hydroxy-beta-dihydromenaquinone-9 sulfotransferase Stf3.